Here is a 335-residue protein sequence, read N- to C-terminus: Foldase protein PrsA (335 aa).

An N-terminal signal peptide occupies residues 1-20 (MKKKIFAGAVTLLSVAVLAA). C21 carries N-palmitoyl cysteine lipidation. C21 carries S-diacylglycerol cysteine lipidation. The PpiC domain occupies 142–239 (TPEVTAQIIK…ASYYIVKLVK (98 aa)). The segment at 300–335 (TGSSTSSSSAASSSKTSESSSAAESSSKEASSSAAE) is disordered. Over residues 302–335 (SSTSSSSAASSSKTSESSSAAESSSKEASSSAAE) the composition is skewed to low complexity.

It belongs to the PrsA family.

The protein resides in the cell membrane. It carries out the reaction [protein]-peptidylproline (omega=180) = [protein]-peptidylproline (omega=0). In terms of biological role, plays a major role in protein secretion by helping the post-translocational extracellular folding of several secreted proteins. The chain is Foldase protein PrsA from Streptococcus sanguinis (strain SK36).